The primary structure comprises 548 residues: Probable 2,3-bisphosphoglycerate-independent phosphoglycerate mutase (548 aa).

Mn(2+) is bound by residues Asp-20 and Ser-73. Residue Ser-73 is the Phosphoserine intermediate of the active site. Residues His-134, 164 to 165 (RD), Arg-200, Arg-207, 279 to 282 (RGDR), and Lys-354 contribute to the substrate site. Mn(2+) contacts are provided by Asp-422, His-426, Asp-463, His-464, and His-493.

Belongs to the BPG-independent phosphoglycerate mutase family. Monomer. It depends on Mn(2+) as a cofactor.

It carries out the reaction (2R)-2-phosphoglycerate = (2R)-3-phosphoglycerate. Its pathway is carbohydrate degradation; glycolysis; pyruvate from D-glyceraldehyde 3-phosphate: step 3/5. In terms of biological role, catalyzes the interconversion of 2-phosphoglycerate and 3-phosphoglycerate. This Leptospira interrogans serogroup Icterohaemorrhagiae serovar copenhageni (strain Fiocruz L1-130) protein is Probable 2,3-bisphosphoglycerate-independent phosphoglycerate mutase (gpmI).